We begin with the raw amino-acid sequence, 280 residues long: Tryptophan synthase alpha chain (280 aa).

Catalysis depends on proton acceptor residues glutamate 50 and aspartate 61.

Belongs to the TrpA family. Tetramer of two alpha and two beta chains.

It catalyses the reaction (1S,2R)-1-C-(indol-3-yl)glycerol 3-phosphate + L-serine = D-glyceraldehyde 3-phosphate + L-tryptophan + H2O. The protein operates within amino-acid biosynthesis; L-tryptophan biosynthesis; L-tryptophan from chorismate: step 5/5. The alpha subunit is responsible for the aldol cleavage of indoleglycerol phosphate to indole and glyceraldehyde 3-phosphate. In Methylorubrum extorquens (strain PA1) (Methylobacterium extorquens), this protein is Tryptophan synthase alpha chain.